The primary structure comprises 580 residues: RuBisCO large subunit-binding protein subunit alpha, chloroplastic (580 aa).

Residues 1–17 show a composition bias toward polar residues; sequence MAQSQLAKGSRQTTGRP. Positions 1–24 are disordered; it reads MAQSQLAKGSRQTTGRPFQNKPAR.

The protein belongs to the chaperonin (HSP60) family. In terms of assembly, oligomer of probably six alpha and six beta subunits.

It is found in the plastid. The protein resides in the chloroplast. Functionally, this protein binds RuBisCO small and large subunits and is implicated in the assembly of the enzyme oligomer. In Chlamydomonas reinhardtii (Chlamydomonas smithii), this protein is RuBisCO large subunit-binding protein subunit alpha, chloroplastic.